The sequence spans 63 residues: Conotoxin TxMRCL-D012 (63 aa).

Positions 1 to 19 (MRCLPVFVILLLLIASTPS) are cleaved as a signal peptide. Positions 20-47 (DTVPLKTKDDMPQASFHGNARRTLQMLS) are excised as a propeptide. At Gln50 the chain carries Pyrrolidone carboxylic acid.

This sequence belongs to the conotoxin T superfamily. Contains 2 disulfide bonds that can be either 'C1-C3, C2-C4' or 'C1-C4, C2-C3', since these disulfide connectivities have been observed for conotoxins with cysteine framework V (for examples, see AC P0DQQ7 and AC P81755). Expressed by the venom duct.

It is found in the secreted. The polypeptide is Conotoxin TxMRCL-D012 (Conus textile (Cloth-of-gold cone)).